We begin with the raw amino-acid sequence, 1026 residues long: Cadherin-like and PC-esterase domain-containing protein 1 (1026 aa).

Positions 1–34 (MVCRPVFPCRRRFCPRPFLVGLVVAICLFYQTLT) are cleaved as a signal peptide. 6 N-linked (GlcNAc...) asparagine glycosylation sites follow: Asn-251, Asn-404, Asn-413, Asn-737, Asn-791, and Asn-985.

This sequence belongs to the PC-esterase family.

The protein is Cadherin-like and PC-esterase domain-containing protein 1 (CPED1) of Homo sapiens (Human).